The primary structure comprises 666 residues: Chaperone protein dnaK1 (666 aa).

Thr198 is modified (phosphothreonine; by autocatalysis).

It belongs to the heat shock protein 70 family.

Functionally, acts as a chaperone. This chain is Chaperone protein dnaK1 (dnaK1), found in Prochlorococcus marinus (strain SARG / CCMP1375 / SS120).